The sequence spans 434 residues: Histidinol dehydrogenase (434 aa).

Substrate is bound by residues S242, Q264, and H267. 2 residues coordinate Zn(2+): Q264 and H267. Catalysis depends on proton acceptor residues E332 and H333. H333, D366, E420, and H425 together coordinate substrate. Residue D366 participates in Zn(2+) binding. Zn(2+) is bound at residue H425.

Belongs to the histidinol dehydrogenase family. It depends on Zn(2+) as a cofactor.

It catalyses the reaction L-histidinol + 2 NAD(+) + H2O = L-histidine + 2 NADH + 3 H(+). It functions in the pathway amino-acid biosynthesis; L-histidine biosynthesis; L-histidine from 5-phospho-alpha-D-ribose 1-diphosphate: step 9/9. Catalyzes the sequential NAD-dependent oxidations of L-histidinol to L-histidinaldehyde and then to L-histidine. This Oleidesulfovibrio alaskensis (strain ATCC BAA-1058 / DSM 17464 / G20) (Desulfovibrio alaskensis) protein is Histidinol dehydrogenase.